Reading from the N-terminus, the 432-residue chain is Tyrosine-protein phosphatase non-receptor type 1 (432 aa).

M1 carries the N-acetylmethionine modification. A Tyrosine-protein phosphatase domain is found at 3-277; that stretch reads MEKEFEQIDK…RFSYLAVIEG (275 aa). Y20 carries the phosphotyrosine modification. S50 carries the post-translational modification Phosphoserine; by PKB/AKT1, CLK1 and CLK2. Y66 carries the post-translational modification Phosphotyrosine; by EGFR. Residues D181 and 215-221 contribute to the substrate site; that span reads CSAGIGR. The active-site Phosphocysteine intermediate is C215. A Cysteine persulfide modification is found at C215. C215 bears the S-nitrosocysteine; in reversibly inhibited form mark. Phosphoserine; by CLK1 and CLK2 is present on residues S242 and S243. Residue Q262 participates in substrate binding. Residues 297–322 form a disordered region; that stretch reads EDLEPPPEHVPPPPRPPKRTLEPHNG. 3 positions are modified to phosphoserine: S335, S362, and S364. Residues 350–402 form a disordered region; that stretch reads SRAPSIAVHSMSSMSQDTEVRKRMVGGGLQSAQASVPTEEELSPTEEEQKAHR. Phosphothreonine is present on T367.

The protein belongs to the protein-tyrosine phosphatase family. Non-receptor class 1 subfamily. As to quaternary structure, interacts with EPHA3 (phosphorylated); dephosphorylates EPHA3 and may regulate its trafficking and function. Interacts with MET. Interacts with NCK1. Post-translationally, ser-50 is the major site of phosphorylation as compared to Ser-242 and Ser-243. Activated by phosphorylation at Ser-50. S-nitrosylation of Cys-215 inactivates the enzyme activity. In terms of processing, sulfhydration at Cys-215 following endoplasmic reticulum stress inactivates the enzyme activity, promoting EIF2AK3/PERK activity. Found in several tissues including central nervous system, liver and kidney. A high level of expression was found in the hippocampus.

The protein resides in the endoplasmic reticulum membrane. The enzyme catalyses O-phospho-L-tyrosyl-[protein] + H2O = L-tyrosyl-[protein] + phosphate. Its function is as follows. Tyrosine-protein phosphatase which acts as a regulator of endoplasmic reticulum unfolded protein response. Mediates dephosphorylation of EIF2AK3/PERK; inactivating the protein kinase activity of EIF2AK3/PERK. May play an important role in CKII- and p60c-src-induced signal transduction cascades. May regulate the EFNA5-EPHA3 signaling pathway which modulates cell reorganization and cell-cell repulsion. May also regulate the hepatocyte growth factor receptor signaling pathway through dephosphorylation of MET. The protein is Tyrosine-protein phosphatase non-receptor type 1 (Ptpn1) of Rattus norvegicus (Rat).